A 299-amino-acid chain; its full sequence is Protoheme IX farnesyltransferase (299 aa).

A run of 9 helical transmembrane segments spans residues 25–45, 47–67, 95–115, 119–139, 147–167, 173–193, 218–238, 243–263, and 279–299; these read VVLLMLITSLVGMFLATRAGV, WTVLLFGNLGIGLCAGAAAAV, AAAIAFALLLATAGMGLLLLF, LAAWLTLASLLGYAVIYTGFL, IVIGGLAGAAPPLLGWVAVTG, PLLLVLIIFAWTPPHFWALAI, VHILLYTLVMFAVTLLPYAIH, LYLVCALLLGARFLHWAWVLY, and IWYLFLLFIALLADHYLLLNI.

This sequence belongs to the UbiA prenyltransferase family. Protoheme IX farnesyltransferase subfamily.

It is found in the cell inner membrane. It carries out the reaction heme b + (2E,6E)-farnesyl diphosphate + H2O = Fe(II)-heme o + diphosphate. Its pathway is porphyrin-containing compound metabolism; heme O biosynthesis; heme O from protoheme: step 1/1. Its function is as follows. Converts heme B (protoheme IX) to heme O by substitution of the vinyl group on carbon 2 of heme B porphyrin ring with a hydroxyethyl farnesyl side group. The sequence is that of Protoheme IX farnesyltransferase from Ectopseudomonas mendocina (strain ymp) (Pseudomonas mendocina).